The chain runs to 59 residues: Large ribosomal subunit protein uL30 (59 aa).

It belongs to the universal ribosomal protein uL30 family. In terms of assembly, part of the 50S ribosomal subunit.

This is Large ribosomal subunit protein uL30 from Histophilus somni (strain 129Pt) (Haemophilus somnus).